Reading from the N-terminus, the 972-residue chain is DNA topoisomerase 1 (972 aa).

Disordered regions lie at residues Met1 to Lys210 and His300 to Ala416. Positions Ile11 to Gly31 are enriched in polar residues. Over residues His32–Ser50 the composition is skewed to basic residues. Basic and acidic residues-rich tracts occupy residues Ser51–Ser65, Ser72–Lys86, and Lys93–Gly103. The segment covering Ser104–Ser114 has biased composition (low complexity). A compositionally biased stretch (basic residues) spans Ser125 to Ser138. The span at Lys139–Gly151 shows a compositional bias: basic and acidic residues. Residues Ser173–Ser183 show a composition bias toward low complexity. At Ser303 the chain carries Phosphoserine. Tyr304 carries the phosphotyrosine modification. Residues His316–Val330 are compositionally biased toward acidic residues. Interaction with DNA regions lie at residues Lys648–Tyr649, Arg711–Lys716, and Thr807–Lys809. Residues Ser655–Phe972 form the Topo IB-type catalytic domain. The O-(3'-phospho-DNA)-tyrosine intermediate role is filled by Tyr930.

It belongs to the type IB topoisomerase family. Interacts with Topors.

It localises to the nucleus. The protein resides in the cytoplasm. It catalyses the reaction ATP-independent breakage of single-stranded DNA, followed by passage and rejoining.. In terms of biological role, releases the supercoiling and torsional tension of DNA introduced during the DNA replication and transcription by transiently cleaving and rejoining one strand of the DNA duplex. Introduces a single-strand break via transesterification at a target site in duplex DNA. The scissile phosphodiester is attacked by the catalytic tyrosine of the enzyme, resulting in the formation of a DNA-(3'-phosphotyrosyl)-enzyme intermediate and the expulsion of a 5'-OH DNA strand. The free DNA strand then undergoes passage around the unbroken strand thus removing DNA supercoils. Finally, in the religation step, the DNA 5'-OH attacks the covalent intermediate to expel the active-site tyrosine and restore the DNA phosphodiester backbone. This is DNA topoisomerase 1 from Drosophila melanogaster (Fruit fly).